Reading from the N-terminus, the 510-residue chain is Glutamyl-tRNA(Gln) amidotransferase subunit A (510 aa).

Residues K82 and S157 each act as charge relay system in the active site. The active-site Acyl-ester intermediate is the S181.

The protein belongs to the amidase family. GatA subfamily. As to quaternary structure, heterotrimer of A, B and C subunits.

The catalysed reaction is L-glutamyl-tRNA(Gln) + L-glutamine + ATP + H2O = L-glutaminyl-tRNA(Gln) + L-glutamate + ADP + phosphate + H(+). Allows the formation of correctly charged Gln-tRNA(Gln) through the transamidation of misacylated Glu-tRNA(Gln) in organisms which lack glutaminyl-tRNA synthetase. The reaction takes place in the presence of glutamine and ATP through an activated gamma-phospho-Glu-tRNA(Gln). In Bordetella avium (strain 197N), this protein is Glutamyl-tRNA(Gln) amidotransferase subunit A.